A 236-amino-acid polypeptide reads, in one-letter code: 2,3,4,5-tetrahydropyridine-2,6-dicarboxylate N-acetyltransferase (236 aa).

This sequence belongs to the transferase hexapeptide repeat family. DapH subfamily.

The catalysed reaction is (S)-2,3,4,5-tetrahydrodipicolinate + acetyl-CoA + H2O = L-2-acetamido-6-oxoheptanedioate + CoA. Its pathway is amino-acid biosynthesis; L-lysine biosynthesis via DAP pathway; LL-2,6-diaminopimelate from (S)-tetrahydrodipicolinate (acetylase route): step 1/3. Functionally, catalyzes the transfer of an acetyl group from acetyl-CoA to tetrahydrodipicolinate. This chain is 2,3,4,5-tetrahydropyridine-2,6-dicarboxylate N-acetyltransferase, found in Clostridium botulinum (strain ATCC 19397 / Type A).